Here is a 350-residue protein sequence, read N- to C-terminus: tRNA N6-adenosine threonylcarbamoyltransferase (350 aa).

Residues histidine 113 and histidine 117 each coordinate Fe cation. Substrate-binding positions include 135 to 139 (LVSGG), aspartate 169, glycine 182, aspartate 186, and asparagine 282. Aspartate 310 is a Fe cation binding site.

The protein belongs to the KAE1 / TsaD family. It depends on Fe(2+) as a cofactor.

Its subcellular location is the cytoplasm. The enzyme catalyses L-threonylcarbamoyladenylate + adenosine(37) in tRNA = N(6)-L-threonylcarbamoyladenosine(37) in tRNA + AMP + H(+). In terms of biological role, required for the formation of a threonylcarbamoyl group on adenosine at position 37 (t(6)A37) in tRNAs that read codons beginning with adenine. Is involved in the transfer of the threonylcarbamoyl moiety of threonylcarbamoyl-AMP (TC-AMP) to the N6 group of A37, together with TsaE and TsaB. TsaD likely plays a direct catalytic role in this reaction. The chain is tRNA N6-adenosine threonylcarbamoyltransferase from Corynebacterium diphtheriae (strain ATCC 700971 / NCTC 13129 / Biotype gravis).